A 310-amino-acid chain; its full sequence is p-hydroxybenzoic acid efflux pump subunit AaeA (310 aa).

Residues 12–32 form a helical membrane-spanning segment; sequence AITVVLVILAFIAIFNAWVYY.

It belongs to the membrane fusion protein (MFP) (TC 8.A.1) family.

The protein localises to the cell inner membrane. Its function is as follows. Forms an efflux pump with AaeB. This is p-hydroxybenzoic acid efflux pump subunit AaeA from Escherichia coli O7:K1 (strain IAI39 / ExPEC).